A 95-amino-acid chain; its full sequence is Non-specific lipid-transfer protein (95 aa).

3 disulfides stabilise this stretch: Cys4–Cys52, Cys14–Cys29, and Cys50–Cys90.

The protein belongs to the plant LTP family. Seeds.

Its function is as follows. Plant non-specific lipid-transfer proteins transfer phospholipids as well as galactolipids across membranes. May play a role in wax or cutin deposition in the cell walls of expanding epidermal cells and certain secretory tissues. The polypeptide is Non-specific lipid-transfer protein (Eleusine coracana (Indian finger millet)).